The sequence spans 239 residues: tRNA (guanine-N(7)-)-methyltransferase (239 aa).

4 residues coordinate S-adenosyl-L-methionine: glutamate 69, glutamate 94, aspartate 121, and aspartate 144. Aspartate 144 is a catalytic residue. Substrate is bound by residues lysine 148, aspartate 180, and 217–220 (TKFE).

It belongs to the class I-like SAM-binding methyltransferase superfamily. TrmB family. Monomer.

It carries out the reaction guanosine(46) in tRNA + S-adenosyl-L-methionine = N(7)-methylguanosine(46) in tRNA + S-adenosyl-L-homocysteine. It functions in the pathway tRNA modification; N(7)-methylguanine-tRNA biosynthesis. Functionally, catalyzes the formation of N(7)-methylguanine at position 46 (m7G46) in tRNA. This chain is tRNA (guanine-N(7)-)-methyltransferase, found in Buchnera aphidicola subsp. Acyrthosiphon pisum (strain 5A).